Consider the following 324-residue polypeptide: MMNDTITPEPHLVPGYTGHCTENRDRVGKTYGKQTHKLLIDPCIYHAPELIVLPIHAKQGLKDYPTEHELKVLRRREDLVDAVYRHPILPGYAGFVPNMASQTGKRYVAAASAGVAQHETLMELYRCENRTLRHRDLLESGKGLFERKLNERLLPQARYRSPLIPVTGRSKGVKDEECPPRVDKLRYSKFTSPHFLEDDDDDKFIINGYAAHIPMAVTRFGESNQVLTHRALCSFSDYMYKRKRDAWCCGQDLTRPAVTCPPVGHFVIYHDDIGMVPSYAGHVPGELYKFGRTYGKTTINAKRWLDIHRGLTGLPEVSNLDYTY.

It belongs to the CIMIP2 family.

It is found in the cytoplasm. The protein resides in the cytoskeleton. It localises to the cilium axoneme. Functionally, probable microtubule inner protein (MIP) part of the dynein-decorated doublet microtubules (DMTs) in cilium axoneme. The polypeptide is CIMIP2 protein GA14893 (Drosophila pseudoobscura pseudoobscura (Fruit fly)).